Here is a 1037-residue protein sequence, read N- to C-terminus: MANYFIDRPVFAWVLAIIMMLAGGLAIMNLPVAQYPQIAPPTITVSATYPGADAQTVEDSVTQVIEQNMNGLDGLMYMSSTSDAAGNASITLTFETGTSPDIAQVQVQNKLQLAMPSLPEAVQQQGISVDKSSSNILMVAAFISDNGSLNQYDIADYVASNIKDPLSRTAGVGSVQLFGSEYAMRIWLDPQKLNKYNLVPSDVISQIKVQNNQISGGQLGGMPQAADQQLNASIIVQTRLQTPEEFGKILLKVQQDGSQVLLRDVARVELGAEDYSTVARYNGKPAAGIAIKLAAGANALDTSRAVKEELNRLSAYFPASLKTVYPYDTTPFIEISIQEVFKTLVEAIILVFLVMYLFLQNFRATIIPTIAVPVVILGTFAILSAVGFTINTLTMFGMVLAIGLLVDDAIVVVENVERVIAEDKLPPKEATHKSMGQIQRALVGIAVVLSAVFMPMAFMSGATGEIYRQFSITLISSMLLSVFVAMSLTPALCATILKAAPEGGHKPNALFARFNTLFEKSTQHYTDSTRSLLRCTGRYMVVYLLICAGMAVLFLRTPTSFLPEEDQGVFMTTAQLPSGATMVNTTKVLQQVTDYYLTKEKDNVQSVFTVGGFGFSGQGQNNGLAFISLKPWSERVGEENSVTAIIQRAMIALSSINKAVVFPFNLPAVAELGTASGFDMELLDNGNLGHEKLTQARNELLSLAAQSPNQVTGVRPNGLEDTPMFKVNVNAAKAEAMGVALSDINQTISTAFGSSYVNDFLNQGRVKKVYVQAGTPFRMLPDNINQWYVRNASGTMAPLSAYSSTEWTYGSPRLERYNGIPSMEILGEAAAGKSTGDAMKFMADLVAKLPAGVGYSWTGLSYQEALSSNQAPALYAISLVVVFLALAALYESWSIPFSVMLVVPLGVVGALLATDLRGLSNDVYFQVGLLTTIGLSAKNAILIVEFAVEMMQKEGKTPIEAIIEAARMRLRPILMTSLAFILGVLPLVISHGAGSGAQNAVGTGVMGGMFAATVLAIYFVPVFFVVVEHLFARFKKA.

Over 1–9 (MANYFIDRP) the chain is Cytoplasmic. The chain crosses the membrane as a helical span at residues 10 to 28 (VFAWVLAIIMMLAGGLAIM). The Periplasmic portion of the chain corresponds to 29-339 (NLPVAQYPQI…TPFIEISIQE (311 aa)). The helical transmembrane segment at 340-359 (VFKTLVEAIILVFLVMYLFL) threads the bilayer. Topologically, residues 360 to 365 (QNFRAT) are cytoplasmic. A helical membrane pass occupies residues 366-385 (IIPTIAVPVVILGTFAILSA). Residues 386–391 (VGFTIN) lie on the Periplasmic side of the membrane. The helical transmembrane segment at 392-413 (TLTMFGMVLAIGLLVDDAIVVV) threads the bilayer. Over 414-441 (ENVERVIAEDKLPPKEATHKSMGQIQRA) the chain is Cytoplasmic. Residues 442-460 (LVGIAVVLSAVFMPMAFMS) traverse the membrane as a helical segment. Topologically, residues 461-473 (GATGEIYRQFSIT) are periplasmic. The chain crosses the membrane as a helical span at residues 474–496 (LISSMLLSVFVAMSLTPALCATI). Residues 497–536 (LKAAPEGGHKPNALFARFNTLFEKSTQHYTDSTRSLLRCT) lie on the Cytoplasmic side of the membrane. Residues 537–555 (GRYMVVYLLICAGMAVLFL) form a helical membrane-spanning segment. Residues 556–870 (RTPTSFLPEE…SYQEALSSNQ (315 aa)) are Periplasmic-facing. Residues 871-890 (APALYAISLVVVFLALAALY) traverse the membrane as a helical segment. Residues 891–896 (ESWSIP) lie on the Cytoplasmic side of the membrane. The chain crosses the membrane as a helical span at residues 897 to 916 (FSVMLVVPLGVVGALLATDL). Residues 917 to 922 (RGLSND) lie on the Periplasmic side of the membrane. A helical membrane pass occupies residues 923-944 (VYFQVGLLTTIGLSAKNAILIV). Topologically, residues 945 to 972 (EFAVEMMQKEGKTPIEAIIEAARMRLRP) are cytoplasmic. Residues 973–991 (ILMTSLAFILGVLPLVISH) traverse the membrane as a helical segment. The Periplasmic portion of the chain corresponds to 992-1004 (GAGSGAQNAVGTG). Residues 1005 to 1027 (VMGGMFAATVLAIYFVPVFFVVV) traverse the membrane as a helical segment. The Cytoplasmic segment spans residues 1028–1037 (EHLFARFKKA).

The protein belongs to the resistance-nodulation-cell division (RND) (TC 2.A.6) family. In terms of assembly, homotrimer. Part of the tripartite efflux system MdtEF-TolC, which is composed of an inner membrane transporter, MdtF, a membrane fusion protein, MdtE, and an outer membrane component, TolC. The complex forms a large protein conduit and can translocate molecules across both the inner and outer membranes.

Its subcellular location is the cell inner membrane. In terms of biological role, part of the tripartite efflux system MdtEF-TolC, which confers resistance to compounds such as rhodamine 6G, erythromycin, doxorubicin, ethidium bromide, TPP, SDS, deoxycholate, crystal violet and benzalkonium. This is Multidrug resistance protein MdtF (mdtF) from Escherichia coli (strain K12).